A 413-amino-acid chain; its full sequence is uncharacterized protein (413 aa).

A Response regulatory domain is found at R2–E129. D54 is modified (4-aspartylphosphate).

This is an uncharacterized protein from Sinorhizobium fredii (strain NBRC 101917 / NGR234).